The chain runs to 226 residues: Adenosine 5'-phosphosulfate reductase (226 aa).

[4Fe-4S] cluster is bound by residues Cys112, Cys113, Cys195, and Cys198. The active-site Nucleophile; cysteine thiosulfonate intermediate is the Cys221.

This sequence belongs to the PAPS reductase family. CysH subfamily. The cofactor is [4Fe-4S] cluster.

Its subcellular location is the cytoplasm. It catalyses the reaction [thioredoxin]-disulfide + sulfite + AMP + 2 H(+) = adenosine 5'-phosphosulfate + [thioredoxin]-dithiol. It participates in sulfur metabolism; hydrogen sulfide biosynthesis; sulfite from sulfate. In terms of biological role, catalyzes the formation of sulfite from adenosine 5'-phosphosulfate (APS) using thioredoxin as an electron donor. The chain is Adenosine 5'-phosphosulfate reductase from Bacillus anthracis (strain A0248).